A 429-amino-acid polypeptide reads, in one-letter code: D-amino acid dehydrogenase (429 aa).

Position 3–17 (3–17) interacts with FAD; it reads VLILGSGVIGVTSAW.

The protein belongs to the DadA oxidoreductase family. It depends on FAD as a cofactor.

It catalyses the reaction a D-alpha-amino acid + A + H2O = a 2-oxocarboxylate + AH2 + NH4(+). Its function is as follows. Oxidative deamination of D-amino acids. The sequence is that of D-amino acid dehydrogenase from Xanthomonas axonopodis pv. citri (strain 306).